A 370-amino-acid chain; its full sequence is Cytochrome b (370 aa).

4 consecutive transmembrane segments (helical) span residues 30–50 (FGSM…FLAF), 74–96 (WVFR…LHIF), 109–129 (VWMS…MGYV), and 175–195 (FFVL…GHLI). Heme b is bound by residues histidine 80 and histidine 94. The heme b site is built by histidine 179 and histidine 193. Histidine 198 lines the a ubiquinone pocket. 4 helical membrane-spanning segments follow: residues 221–240 (YLGK…VLSL), 284–304 (VLGV…ALVN), 316–336 (FLVF…QCTV), and 342–362 (ILSP…LFIF).

It belongs to the cytochrome b family. The main subunits of complex b-c1 are: cytochrome b, cytochrome c1 and the Rieske protein. Requires heme b as cofactor.

It is found in the mitochondrion inner membrane. Component of the ubiquinol-cytochrome c reductase complex (complex III or cytochrome b-c1 complex) that is part of the mitochondrial respiratory chain. The b-c1 complex mediates electron transfer from ubiquinol to cytochrome c. Contributes to the generation of a proton gradient across the mitochondrial membrane that is then used for ATP synthesis. This is Cytochrome b from Caenorhabditis elegans.